We begin with the raw amino-acid sequence, 417 residues long: MSTPRSGCEILCIGTELLLGNILNGNARWLAESLASLGIPHFRQGVVGDNPERLGEAVLEAASRSRLLICTGGLGPTPDDLTTETLAACFGVALEERADVLADLEAKLRARGRSLGSSNRKQALLPQGAEVLPNPTGTAPGIIWTPQPGFTVLTFPGVPSEMRAMWQQTAVPWLQAQHLVAGTFRSRLLHFWGLSESSLAESVAPLLELQNPTVAPYACQGEVKLRITAHGATASKAEAAIAPVEQELRRIGGEHCFGADDDSLASVVLQQLRSRNQTLAVAESCTGGGVGSALTAISGSSDVFLGGVIAYANRIKQDLLQVPSKLLEREGAVSAAVATAMAEGARRQLGSDWGVAVTGVAGPGGGSDSKPVGLVHFAVAGPDGCSHLERRYGDRRGRDWIRGLSVGDALNLLRLQL.

Belongs to the CinA family.

The sequence is that of CinA-like protein from Synechococcus sp. (strain RCC307).